The primary structure comprises 449 residues: Serine/threonine-protein phosphatase 2A activator 2 (449 aa).

2 disordered regions span residues 1 to 72 and 378 to 416; these read MDSS…DPST and MSEQDPNALGSEENEEEGGEVEVYDDSDGKRHVHQPTGW. Positions 54 to 69 are enriched in pro residues; it reads NPTPVPETPALPPRPD. The span at 389–403 shows a compositional bias: acidic residues; sequence EENEEEGGEVEVYDD.

The protein belongs to the PTPA-type PPIase family.

Its subcellular location is the cytoplasm. It carries out the reaction [protein]-peptidylproline (omega=180) = [protein]-peptidylproline (omega=0). In terms of biological role, PPIases accelerate the folding of proteins. It catalyzes the cis-trans isomerization of proline imidic peptide bonds in oligopeptides. Acts as a regulatory subunit for PP2A-like phosphatases modulating their activity or substrate specificity, probably by inducing a conformational change in the catalytic subunit, a direct target of the PPIase. Can reactivate inactive phosphatase PP2A-phosphatase methylesterase complexes (PP2Ai) in presence of ATP and Mg(2+) by dissociating the inactive form from the complex. The polypeptide is Serine/threonine-protein phosphatase 2A activator 2 (rrd-2) (Neurospora crassa (strain ATCC 24698 / 74-OR23-1A / CBS 708.71 / DSM 1257 / FGSC 987)).